The chain runs to 335 residues: Biotin synthase (335 aa).

A Radical SAM core domain is found at Asn-51–Arg-278. Residues Cys-66, Cys-70, and Cys-73 each contribute to the [4Fe-4S] cluster site. The [2Fe-2S] cluster site is built by Cys-110, Cys-141, Cys-201, and Arg-273.

Belongs to the radical SAM superfamily. Biotin synthase family. In terms of assembly, homodimer. The cofactor is [4Fe-4S] cluster. It depends on [2Fe-2S] cluster as a cofactor.

It carries out the reaction (4R,5S)-dethiobiotin + (sulfur carrier)-SH + 2 reduced [2Fe-2S]-[ferredoxin] + 2 S-adenosyl-L-methionine = (sulfur carrier)-H + biotin + 2 5'-deoxyadenosine + 2 L-methionine + 2 oxidized [2Fe-2S]-[ferredoxin]. It functions in the pathway cofactor biosynthesis; biotin biosynthesis; biotin from 7,8-diaminononanoate: step 2/2. Its function is as follows. Catalyzes the conversion of dethiobiotin (DTB) to biotin by the insertion of a sulfur atom into dethiobiotin via a radical-based mechanism. This chain is Biotin synthase, found in Bordetella bronchiseptica (strain ATCC BAA-588 / NCTC 13252 / RB50) (Alcaligenes bronchisepticus).